Consider the following 200-residue polypeptide: Small ribosomal subunit protein eS1 (200 aa).

Belongs to the eukaryotic ribosomal protein eS1 family.

This chain is Small ribosomal subunit protein eS1, found in Thermococcus onnurineus (strain NA1).